Reading from the N-terminus, the 90-residue chain is Large ribosomal subunit protein bL27 (90 aa).

The segment at 1–20 is disordered; that stretch reads MAHKKAGGSSRNGRDSAGKR.

This sequence belongs to the bacterial ribosomal protein bL27 family.

In Rhodopseudomonas palustris (strain ATCC BAA-98 / CGA009), this protein is Large ribosomal subunit protein bL27.